The following is a 1154-amino-acid chain: FERM domain-containing protein A (1154 aa).

5 disordered regions span residues 122–149 (NNNSSIITTTTTTTNNNNNSNCGSSSSS), 432–468 (NLSSSGGSGNGSGSGNGSSSSSSNSSSGNNNNHNHHN), 715–734 (NKNNNNNNNSNNSSTSSSSS), 771–794 (SNSNSNILNNSNDEQSTSTSTSSS), and 961–980 (TNGSSSSSSNNNGGNSNNGI). FERM domains follow at residues 218 to 547 (PLHQ…PSIQ) and 666 to 1103 (REIV…QTKL). A compositionally biased stretch (gly residues) spans 437 to 447 (GGSGNGSGSGN). Residues 448-463 (GSSSSSSNSSSGNNNN) are compositionally biased toward low complexity.

Functionally, key regulator of adhesion dynamics, it acts as an anti-adhesive. Plays a critical role in the regulation of cell-cell adhesion, multi-cellular development and, in particular, the formation of the organising center known as the tip. Required for turnover of paxillin-adhesion sites during cell migration. Plays a major role in normal cell shape, cell-substrate adhesion and actin cytoskeleton organization. This is FERM domain-containing protein A (frmA) from Dictyostelium discoideum (Social amoeba).